The primary structure comprises 311 residues: Methionyl-tRNA formyltransferase (311 aa).

(6S)-5,6,7,8-tetrahydrofolate is bound at residue 112 to 115; that stretch reads SLLP.

This sequence belongs to the Fmt family.

It carries out the reaction L-methionyl-tRNA(fMet) + (6R)-10-formyltetrahydrofolate = N-formyl-L-methionyl-tRNA(fMet) + (6S)-5,6,7,8-tetrahydrofolate + H(+). Attaches a formyl group to the free amino group of methionyl-tRNA(fMet). The formyl group appears to play a dual role in the initiator identity of N-formylmethionyl-tRNA by promoting its recognition by IF2 and preventing the misappropriation of this tRNA by the elongation apparatus. The polypeptide is Methionyl-tRNA formyltransferase (Bradyrhizobium sp. (strain ORS 278)).